We begin with the raw amino-acid sequence, 168 residues long: Pathogenesis-related protein 1B (168 aa).

A signal peptide spans methionine 1–alanine 30. Residues leucine 38–tyrosine 156 enclose the SCP domain.

The protein belongs to the CRISP family. In terms of processing, three disulfide bonds are present.

It localises to the vacuole. In terms of biological role, probably involved in the defense reaction of plants against pathogens. The protein is Pathogenesis-related protein 1B of Nicotiana tabacum (Common tobacco).